The primary structure comprises 292 residues: Formamidopyrimidine-DNA glycosylase (292 aa).

P2 serves as the catalytic Schiff-base intermediate with DNA. E3 acts as the Proton donor in catalysis. The active-site Proton donor; for beta-elimination activity is the K60. 3 residues coordinate DNA: H109, R128, and R173. The segment at 258–292 (NVYRRTGRECRKCGNLIERQKITGRSTHWCPNCQK) adopts an FPG-type zinc-finger fold. R282 functions as the Proton donor; for delta-elimination activity in the catalytic mechanism.

This sequence belongs to the FPG family. In terms of assembly, monomer. Zn(2+) serves as cofactor.

The catalysed reaction is Hydrolysis of DNA containing ring-opened 7-methylguanine residues, releasing 2,6-diamino-4-hydroxy-5-(N-methyl)formamidopyrimidine.. It carries out the reaction 2'-deoxyribonucleotide-(2'-deoxyribose 5'-phosphate)-2'-deoxyribonucleotide-DNA = a 3'-end 2'-deoxyribonucleotide-(2,3-dehydro-2,3-deoxyribose 5'-phosphate)-DNA + a 5'-end 5'-phospho-2'-deoxyribonucleoside-DNA + H(+). In terms of biological role, involved in base excision repair of DNA damaged by oxidation or by mutagenic agents. Acts as a DNA glycosylase that recognizes and removes damaged bases. Has a preference for oxidized purines, such as 7,8-dihydro-8-oxoguanine (8-oxoG). Has AP (apurinic/apyrimidinic) lyase activity and introduces nicks in the DNA strand. Cleaves the DNA backbone by beta-delta elimination to generate a single-strand break at the site of the removed base with both 3'- and 5'-phosphates. The chain is Formamidopyrimidine-DNA glycosylase from Prochlorococcus marinus (strain MIT 9301).